We begin with the raw amino-acid sequence, 260 residues long: Intermembrane phospholipid transport system permease protein MlaE (260 aa).

Residues 1 to 50 (MLLNALASLGHKGIKTLRTFGRAGLMLFNALVGKPEFRKHAPLLVRQLYN) are Cytoplasmic-facing. A helical transmembrane segment spans residues 51–71 (VGVLSMLIIVVSGVFIGMVLG). The Periplasmic segment spans residues 72 to 88 (LQGYLVLTTYSAETSLG). A helical transmembrane segment spans residues 89-109 (MLVALSLLRELGPVVAALLFA). Residues 110–147 (GRAGSALTAEIGLMRATEQLSSMEMMAVDPLRRVISPR) are Cytoplasmic-facing. The chain crosses the membrane as a helical span at residues 148–168 (FWAGVISLPLLTVIFVAVGIW). Topologically, residues 169 to 198 (GGSLVGVSWKGIDSGFFWSAMQNAVDWRMD) are periplasmic. Residues 199–219 (LVNCLIKSVVFAITVTWISLF) traverse the membrane as a helical segment. The Cytoplasmic segment spans residues 220 to 238 (NGYDAIPTSAGISRATTRT). Residues 239–259 (VVHSSLAVLGLDFVLTALMFG) traverse the membrane as a helical segment. Position 260 (asparagine 260) is a topological domain, periplasmic.

Belongs to the MlaE permease family. In terms of assembly, the complex is composed of two ATP-binding proteins (MlaF), two transmembrane proteins (MlaE), two cytoplasmic solute-binding proteins (MlaB) and six periplasmic solute-binding proteins (MlaD).

The protein localises to the cell inner membrane. In terms of biological role, part of the ABC transporter complex MlaFEDB, which is involved in a phospholipid transport pathway that maintains lipid asymmetry in the outer membrane by retrograde trafficking of phospholipids from the outer membrane to the inner membrane. Probably responsible for the translocation of the substrate across the membrane. The protein is Intermembrane phospholipid transport system permease protein MlaE of Escherichia coli O157:H7.